We begin with the raw amino-acid sequence, 537 residues long: O-phosphoserine--tRNA(Cys) ligase (537 aa).

Substrate contacts are provided by residues 186-188 (HMT), 231-233 (SAS), 273-274 (YY), and Asn-317.

The protein belongs to the class-II aminoacyl-tRNA synthetase family. O-phosphoseryl-tRNA(Cys) synthetase subfamily. In terms of assembly, homotetramer. Interacts with SepCysS.

The catalysed reaction is tRNA(Cys) + O-phospho-L-serine + ATP = O-phospho-L-seryl-tRNA(Cys) + AMP + diphosphate. Catalyzes the attachment of O-phosphoserine (Sep) to tRNA(Cys). The polypeptide is O-phosphoserine--tRNA(Cys) ligase (Methanococcus maripaludis (strain DSM 14266 / JCM 13030 / NBRC 101832 / S2 / LL)).